Consider the following 290-residue polypeptide: ATP synthase gamma chain (290 aa).

Belongs to the ATPase gamma chain family. As to quaternary structure, F-type ATPases have 2 components, CF(1) - the catalytic core - and CF(0) - the membrane proton channel. CF(1) has five subunits: alpha(3), beta(3), gamma(1), delta(1), epsilon(1). CF(0) has three main subunits: a, b and c.

Its subcellular location is the cell inner membrane. Produces ATP from ADP in the presence of a proton gradient across the membrane. The gamma chain is believed to be important in regulating ATPase activity and the flow of protons through the CF(0) complex. The polypeptide is ATP synthase gamma chain (Chlorobium luteolum (strain DSM 273 / BCRC 81028 / 2530) (Pelodictyon luteolum)).